The following is a 1137-amino-acid chain: Ribonucleoside-diphosphate reductase large subunit (1137 aa).

Residues 1 to 32 are disordered; the sequence is MASRPAASSPVEARAPVGGQEAGGPSAATQGE. Residues 64–84 carry the RIP homotypic interaction motif (RHIM) motif; the sequence is SYRISDNNFVQCGSNCTMIID. Disordered regions lie at residues 124 to 159 and 173 to 315; these read GGTP…FTLG and AVFG…YPVP. A compositionally biased stretch (polar residues) spans 131-141; the sequence is AGTSTGTQTAD. The segment covering 196 to 206 has biased composition (acidic residues); the sequence is SDSDDSEDTDS. Residues 281 to 290 are compositionally biased toward low complexity; sequence AGAGLAADPA. Basic and acidic residues predominate over residues 291-304; the sequence is VARDDAEGLSDPRP. Substrate-binding positions include threonine 566, 581–582, glycine 612, 791–795, and 968–972; these read SC, NLCTE, and PTAAS. A disulfide bond links cysteine 582 and cysteine 808. The Proton acceptor role is filled by asparagine 791. Residue cysteine 793 is the Cysteine radical intermediate of the active site. Glutamate 795 acts as the Proton acceptor in catalysis.

Belongs to the ribonucleoside diphosphate reductase large chain family. Heterotetramer composed of a homodimer of the large subunit (R1) and a homodimer of the small subunit (R2). Larger multisubunit protein complex are also active, composed of (R1)n(R2)n. Self-assembles (via RIP homotypic interaction motif/RHIM) into homomeric fibrillar amyloid structures. Interacts (via RHIM) with human RIPK1 (via RHIM). Interacts (via RHIM) with human RIPK3 (via RHIM); the interaction leads to heteromeric amyloid assemblies. Interacts (via RHIM) with human ZBP1 (via RHIM); the interaction leads to heteromeric amyloid assemblies. Interacts (via C-terminus) with host CASP8.

The catalysed reaction is a 2'-deoxyribonucleoside 5'-diphosphate + [thioredoxin]-disulfide + H2O = a ribonucleoside 5'-diphosphate + [thioredoxin]-dithiol. Functionally, ribonucleoside-diphosphate reductase holoenzyme that provides the precursors necessary for viral DNA synthesis. Allows virus growth in non-dividing cells, as well as reactivation from latency in infected hosts. Catalyzes the biosynthesis of deoxyribonucleotides from the corresponding ribonucleotides. Prevents host necroptosis by targeting host RIPK1 and RIPK3, thereby hampering the formation of necroptotic RIPK1-RIPK3 complexes. Forms hetero-amyloid structures with host proteins RIPK3 or ZBP1 which may prevent RIPK3- and ZBP1-mediated necroptosis. In addition, inhibits extrinsic apoptosis by targeting host CASP8. The sequence is that of Ribonucleoside-diphosphate reductase large subunit from Human herpesvirus 1 (strain 17) (HHV-1).